Consider the following 560-residue polypeptide: Phenol regulator MopR (560 aa).

Phenol contacts are provided by His106 and Trp134. 4 residues coordinate Zn(2+): Cys155, Glu178, Cys181, and Cys189. The Sigma-54 factor interaction domain maps to 245-474 (AVGESVAYRK…LENLLERATL (230 aa)). ATP-binding positions include 273–280 (GETGVGKE) and 336–345 (AHGGTIFLDE).

Homodimer.

With respect to regulation, activity is triggered by phenol binding. In terms of biological role, involved in the regulation of the phenol degradation pathway. Activates phenol hydroxylase expression in the presence of phenol. This chain is Phenol regulator MopR, found in Acinetobacter guillouiae (Acinetobacter genomosp. 11).